The chain runs to 244 residues: PF03932 family protein CutC (244 aa).

This sequence belongs to the CutC family.

It localises to the cytoplasm. In Pasteurella multocida (strain Pm70), this protein is PF03932 family protein CutC.